Reading from the N-terminus, the 49-residue chain is Large ribosomal subunit protein bL33C (49 aa).

This sequence belongs to the bacterial ribosomal protein bL33 family.

The sequence is that of Large ribosomal subunit protein bL33C from Bacillus pumilus (strain SAFR-032).